The primary structure comprises 515 residues: SWI/SNF-related matrix-associated actin-dependent regulator of chromatin subfamily D member 1 (515 aa).

Residues 1-128 (MAARAGFQSV…RNHNAKKKKM (128 aa)) form a disordered region. Residues 14-23 (GGAGASGGAG) show a composition bias toward gly residues. The segment at 43–167 (APGQGLYRSP…DQTIMRKRLD (125 aa)) is interaction with ESR1, NR1H4, NR3C1, PGR and SMARCA4. Residues Arg68 and Arg88 each carry the asymmetric dimethylarginine modification. A Glycyl lysine isopeptide (Lys-Gly) (interchain with G-Cter in SUMO2) cross-link involves residue Lys101. Over residues 104–117 (APQQIQQVQQQAVQ) the composition is skewed to low complexity. Residues 168–474 (IQEALKRPIK…TMTDVVGNPE (307 aa)) form an interaction with SMARCC1 and SMARCC2 region. Residues 180-515 (RKLRIFISNT…LEQALGIRNT (336 aa)) form a necessary for GR/NR3C1-mediated remodeling and transcription from chromatin; required for GR/NR3C1 interaction with the BRG1/SMARCA4 complex in vivo region. The residue at position 203 (Thr203) is a Phosphothreonine. At Lys223 the chain carries N6-acetyllysine. The SWIB/MDM2 domain maps to 290–367 (YQPPQFKLDP…PQRLHALLMP (78 aa)). The stretch at 412–440 (ASQQEIATLDNKIHETIETINQLKTQREF) forms a coiled coil.

Belongs to the SMARCD family. As to quaternary structure, component of the multiprotein chromatin-remodeling complexes SWI/SNF: SWI/SNF-A (BAF), SWI/SNF-B (PBAF) and related complexes. The canonical complex contains a catalytic subunit (either SMARCA4/BRG1/BAF190A or SMARCA2/BRM/BAF190B), and at least SMARCE1, ACTL6A/BAF53, SMARCC1/BAF155, SMARCC2/BAF170, and SMARCB1/SNF5/BAF47. Other subunits specific to each of the complexes may also be present permitting several possible combinations developmentally and tissue specific. Component of the BAF complex, which includes at least actin (ACTB), ARID1A/BAF250A, ARID1B/BAF250B, SMARCA2/BRM, SMARCA4/BRG1/BAF190A, ACTL6A/BAF53, ACTL6B/BAF53B, SMARCE1/BAF57, SMARCC1/BAF155, SMARCC2/BAF170, SMARCB1/SNF5/INI1, and one or more SMARCD1/BAF60A, SMARCD2/BAF60B, or SMARCD3/BAF60C. In muscle cells, the BAF complex also contains DPF3. Component of neural progenitors-specific chromatin remodeling complex (npBAF complex) composed of at least, ARID1A/BAF250A or ARID1B/BAF250B, SMARCD1/BAF60A, SMARCD3/BAF60C, SMARCA2/BRM/BAF190B, SMARCA4/BRG1/BAF190A, SMARCB1/BAF47, SMARCC1/BAF155, SMARCE1/BAF57, SMARCC2/BAF170, PHF10/BAF45A, ACTL6A/BAF53A and actin. Component of neuron-specific chromatin remodeling complex (nBAF complex) composed of at least, ARID1A/BAF250A or ARID1B/BAF250B, SMARCD1/BAF60A, SMARCD3/BAF60C, SMARCA2/BRM/BAF190B, SMARCA4/BRG1/BAF190A, SMARCB1/BAF47, SMARCC1/BAF155, SMARCE1/BAF57, SMARCC2/BAF170, DPF1/BAF45B, DPF3/BAF45C, ACTL6B/BAF53B and actin. Component of the SWI/SNF-B (PBAF) chromatin remodeling complex, at least composed of SMARCA4/BRG1, SMARCB1/BAF47/SNF5, ACTL6A/BAF53A or ACTL6B/BAF53B, SMARCE1/BAF57, SMARCD1/BAF60A, SMARCD2/BAF60B, perhaps SMARCD3/BAF60C, SMARCC1/BAF155, SMARCC2/BAF170, PBRM1/BAF180, ARID2/BAF200 and actin (ACTB). Component of SWI/SNF (GBAF) subcomplex, which includes at least BICRA or BICRAL (mutually exclusive), BRD9, SS18, SMARCA2/BRM, SMARCA4/BRG1/BAF190A, ACTL6A/BAF53, SMARCC1/BAF155, and SMARCD1/BAF60A. Specifically interacts with the VDR heterodimer complex. Interacts with ESR1, NR3C1, NR1H4, PGR, SMARCA4, SMARCC1 and SMARCC2. Interacts with DPF2. Interacts with DPF3a (isoform 2 of DPF3/BAF45C) and with HDGFL2 in a DPF3a-dependent manner. Interacts with FOS, FOSB isoform 1 and 2, FOSL1 and FOSL2. Interacts with AKIRIN2. As to expression, ubiquitous.

The protein resides in the nucleus. In terms of biological role, involved in transcriptional activation and repression of select genes by chromatin remodeling (alteration of DNA-nucleosome topology). Component of SWI/SNF chromatin remodeling complexes that carry out key enzymatic activities, changing chromatin structure by altering DNA-histone contacts within a nucleosome in an ATP-dependent manner. Belongs to the neural progenitors-specific chromatin remodeling complex (npBAF complex) and the neuron-specific chromatin remodeling complex (nBAF complex). During neural development a switch from a stem/progenitor to a postmitotic chromatin remodeling mechanism occurs as neurons exit the cell cycle and become committed to their adult state. The transition from proliferating neural stem/progenitor cells to postmitotic neurons requires a switch in subunit composition of the npBAF and nBAF complexes. As neural progenitors exit mitosis and differentiate into neurons, npBAF complexes which contain ACTL6A/BAF53A and PHF10/BAF45A, are exchanged for homologous alternative ACTL6B/BAF53B and DPF1/BAF45B or DPF3/BAF45C subunits in neuron-specific complexes (nBAF). The npBAF complex is essential for the self-renewal/proliferative capacity of the multipotent neural stem cells. The nBAF complex along with CREST plays a role regulating the activity of genes essential for dendrite growth. Has a strong influence on vitamin D-mediated transcriptional activity from an enhancer vitamin D receptor element (VDRE). May be a link between mammalian SWI-SNF-like chromatin remodeling complexes and the vitamin D receptor (VDR) heterodimer. Mediates critical interactions between nuclear receptors and the BRG1/SMARCA4 chromatin-remodeling complex for transactivation. The sequence is that of SWI/SNF-related matrix-associated actin-dependent regulator of chromatin subfamily D member 1 (Smarcd1) from Mus musculus (Mouse).